The sequence spans 466 residues: Ribulose bisphosphate carboxylase large chain (466 aa).

K5 carries the N6,N6,N6-trimethyllysine modification. Residues N114 and T164 each contribute to the substrate site. The active-site Proton acceptor is the K166. K168 lines the substrate pocket. Mg(2+) is bound by residues K192, D194, and E195. K192 bears the N6-carboxylysine mark. H285 serves as the catalytic Proton acceptor. Substrate-binding residues include R286, H318, and S370.

The protein belongs to the RuBisCO large chain family. Type I subfamily. Heterohexadecamer of 8 large chains and 8 small chains; disulfide-linked. The disulfide link is formed within the large subunit homodimers. Mg(2+) is required as a cofactor. The disulfide bond which can form in the large chain dimeric partners within the hexadecamer appears to be associated with oxidative stress and protein turnover.

It localises to the plastid. The protein resides in the chloroplast. It carries out the reaction 2 (2R)-3-phosphoglycerate + 2 H(+) = D-ribulose 1,5-bisphosphate + CO2 + H2O. The enzyme catalyses D-ribulose 1,5-bisphosphate + O2 = 2-phosphoglycolate + (2R)-3-phosphoglycerate + 2 H(+). Its function is as follows. RuBisCO catalyzes two reactions: the carboxylation of D-ribulose 1,5-bisphosphate, the primary event in carbon dioxide fixation, as well as the oxidative fragmentation of the pentose substrate in the photorespiration process. Both reactions occur simultaneously and in competition at the same active site. This is Ribulose bisphosphate carboxylase large chain from Saururus cernuus (Lizard's tail).